A 126-amino-acid chain; its full sequence is Holo-[acyl-carrier-protein] synthase (126 aa).

Mg(2+) is bound by residues D9 and E57.

This sequence belongs to the P-Pant transferase superfamily. AcpS family. The cofactor is Mg(2+).

It localises to the cytoplasm. It carries out the reaction apo-[ACP] + CoA = holo-[ACP] + adenosine 3',5'-bisphosphate + H(+). Transfers the 4'-phosphopantetheine moiety from coenzyme A to a Ser of acyl-carrier-protein. This is Holo-[acyl-carrier-protein] synthase from Alteromonas mediterranea (strain DSM 17117 / CIP 110805 / LMG 28347 / Deep ecotype).